We begin with the raw amino-acid sequence, 163 residues long: uncharacterized protein (163 aa).

This is an uncharacterized protein from Dictyostelium discoideum (Social amoeba).